A 347-amino-acid chain; its full sequence is S-adenosylmethionine:tRNA ribosyltransferase-isomerase (347 aa).

It belongs to the QueA family. As to quaternary structure, monomer.

Its subcellular location is the cytoplasm. The catalysed reaction is 7-aminomethyl-7-carbaguanosine(34) in tRNA + S-adenosyl-L-methionine = epoxyqueuosine(34) in tRNA + adenine + L-methionine + 2 H(+). It participates in tRNA modification; tRNA-queuosine biosynthesis. In terms of biological role, transfers and isomerizes the ribose moiety from AdoMet to the 7-aminomethyl group of 7-deazaguanine (preQ1-tRNA) to give epoxyqueuosine (oQ-tRNA). In Gluconobacter oxydans (strain 621H) (Gluconobacter suboxydans), this protein is S-adenosylmethionine:tRNA ribosyltransferase-isomerase.